The following is a 104-amino-acid chain: Large ribosomal subunit protein uL24 (104 aa).

The protein belongs to the universal ribosomal protein uL24 family. As to quaternary structure, part of the 50S ribosomal subunit.

Functionally, one of two assembly initiator proteins, it binds directly to the 5'-end of the 23S rRNA, where it nucleates assembly of the 50S subunit. One of the proteins that surrounds the polypeptide exit tunnel on the outside of the subunit. The polypeptide is Large ribosomal subunit protein uL24 (Pseudomonas fluorescens (strain Pf0-1)).